The chain runs to 54 residues: U7-ctenitoxin-Pk1a (54 aa).

5 disulfide bridges follow: Cys3/Cys17, Cys10/Cys23, Cys14/Cys52, Cys16/Cys37, and Cys25/Cys35.

As to expression, expressed by the venom gland.

It is found in the secreted. Blocks voltage-gated sodium channels (Nav). Causes immediate spastic paralysis and death in mice within 1 minute of injection at dose levels of 1.5 ug per mouse. This is U7-ctenitoxin-Pk1a from Phoneutria keyserlingi (Brazilian wandering spider).